We begin with the raw amino-acid sequence, 393 residues long: Cysteine protease ATG4B (393 aa).

The residue at position 1 (M1) is an N-acetylmethionine. S34 is subject to Phosphoserine. The active-site Nucleophile is C74. S-nitrosocysteine is present on C189. Active-site residues include D278 and H280. An S-nitrosocysteine mark is found at C292 and C301. C292 and C361 are oxidised to a cystine. A phosphoserine mark is found at S316 and S383. The LIR signature appears at 388–391 (FEIL). S392 carries the phosphoserine modification.

Belongs to the peptidase C54 family. As to quaternary structure, interacts with PFKP; promoting phosphorylation of ATG4B at Ser-34. Interacts with GBP7. Phosphorylation at Ser-383 and Ser-392 promotes autophagy by increasing protein delipidation activity without affecting proteolytic activation of ATG8 proteins. Phosphorylation at Ser-316 by ULK1 inhibits autophagy by decreasing both proteolytic activation and delipidation activities. Phosphorylation at Ser-316 is dephosphorylated by protein phosphatase 2A (PP2A). Phosphorylation at Ser-34 by AKT2 promotes its hydrolase activity, leading to increased proteolytic activation and delipidation of ATG8 family proteins. Phosphorylation at Ser-34 by AKT1 promotes mitochondrial localization and inhibition of the F1F0-ATP synthase activity, leading to elevation of mitochondrial reactive oxygen species (ROS). In terms of processing, ubiquitinated by RNF5, leading to its degradation by the proteasome. Post-translationally, S-nitrosylation at Cys-189 and Cys-292 in response to high glucose decreases both proteolytic activation and delipidation activities. O-glycosylated by OGT, leading to increase protease activity, thereby promoting the proteolytic activation of ATG8 family proteins. In terms of processing, forms reversible intrachain disulfide bonds in response to oxidative stress. Forms interchain disulfide bonds, leading to formation of homooligomers in response to oxidation.

The protein resides in the cytoplasm. Its subcellular location is the cytosol. It localises to the cytoplasmic vesicle. It is found in the autophagosome. The protein localises to the endoplasmic reticulum. The protein resides in the mitochondrion. It carries out the reaction [protein]-C-terminal L-amino acid-glycyl-phosphatidylethanolamide + H2O = [protein]-C-terminal L-amino acid-glycine + a 1,2-diacyl-sn-glycero-3-phosphoethanolamine. The catalysed reaction is [protein]-C-terminal L-amino acid-glycyl-phosphatidylserine + H2O = [protein]-C-terminal L-amino acid-glycine + a 1,2-diacyl-sn-glycero-3-phospho-L-serine. With respect to regulation, inhibited by N-ethylmaleimide. Redox-regulated during autophagy since reducing conditions activate ATG4A whereas an oxidizing environment such as the presence of H(2)O(2) inhibits its activity. The cysteine protease activity compounds is inhibited by styrylquinoline compounds 4-28 and LV-320. Its function is as follows. Cysteine protease that plays a key role in autophagy by mediating both proteolytic activation and delipidation of ATG8 family proteins. Required for canonical autophagy (macroautophagy), non-canonical autophagy as well as for mitophagy. The protease activity is required for proteolytic activation of ATG8 family proteins: cleaves the C-terminal amino acid of ATG8 proteins MAP1LC3A, MAP1LC3B, MAP1LC3C, GABARAPL1, GABARAPL2 and GABARAP, to reveal a C-terminal glycine. Exposure of the glycine at the C-terminus is essential for ATG8 proteins conjugation to phosphatidylethanolamine (PE) and insertion to membranes, which is necessary for autophagy. Protease activity is also required to counteract formation of high-molecular weight conjugates of ATG8 proteins (ATG8ylation): acts as a deubiquitinating-like enzyme that removes ATG8 conjugated to other proteins, such as ATG3. In addition to the protease activity, also mediates delipidation of ATG8 family proteins. Catalyzes delipidation of PE-conjugated forms of ATG8 proteins during macroautophagy. Also involved in non-canonical autophagy, a parallel pathway involving conjugation of ATG8 proteins to single membranes at endolysosomal compartments, by catalyzing delipidation of ATG8 proteins conjugated to phosphatidylserine (PS). Compared to other members of the family (ATG4A, ATG4C or ATG4C), constitutes the major protein for proteolytic activation of ATG8 proteins, while it displays weaker delipidation activity than other ATG4 paralogs. Involved in phagophore growth during mitophagy independently of its protease activity and of ATG8 proteins: acts by regulating ATG9A trafficking to mitochondria and promoting phagophore-endoplasmic reticulum contacts during the lipid transfer phase of mitophagy. The polypeptide is Cysteine protease ATG4B (Mus musculus (Mouse)).